Reading from the N-terminus, the 89-residue chain is Small ribosomal subunit protein bS20 (89 aa).

Positions 1-25 are disordered; sequence MANTPQSKKRARQLERRTAVNKARR.

This sequence belongs to the bacterial ribosomal protein bS20 family.

Its function is as follows. Binds directly to 16S ribosomal RNA. The sequence is that of Small ribosomal subunit protein bS20 from Paracoccus denitrificans (strain Pd 1222).